The chain runs to 225 residues: RNA-binding protein 24-A (225 aa).

Positions 11–88 (TKIFVGGLPY…RKANVNLAYL (78 aa)) constitute an RRM domain.

Its subcellular location is the nucleus. The protein localises to the cytoplasm. Functionally, multifunctional RNA-binding protein involved in the regulation of pre-mRNA splicing, mRNA stability and mRNA translation important for cell fate decision and differentiation. Plays a major role in pre-mRNA alternative splicing regulation. Mediates preferentially muscle-specific exon inclusion in numerous mRNAs important for striated cardiac and skeletal muscle cell differentiation. Binds to intronic splicing enhancer (ISE) composed of stretches of GU-rich motifs localized in flanking intron of exon that will be included by alternative splicing. Involved in embryonic stem cell (ESC) transition to cardiac cell differentiation by promoting pre-mRNA alternative splicing events of several pluripotency and/or differentiation genes. Plays a role in the regulation of mRNA stability and mRNA translation to which it is bound. Involved in myogenic differentiation by regulating myog levels. Binds to a huge amount of mRNAs. Required for embryonic heart development, sarcomer and M-band formation in striated muscles. The polypeptide is RNA-binding protein 24-A (rbm24-a) (Xenopus laevis (African clawed frog)).